Consider the following 149-residue polypeptide: Basic phospholipase A2 homolog MitTx-beta (149 aa).

The first 30 residues, 1–30 (MDKMNPAHLLVLAAVCVSLLGASSIPPQAL), serve as a signal peptide directing secretion. Cystine bridges form between Cys41/Cys100, Cys55/Cys148, Cys57/Cys73, Cys72/Cys130, Cys79/Cys123, Cys89/Cys116, and Cys109/Cys121.

Belongs to the phospholipase A2 family. Group I subfamily. K49 sub-subfamily. As to quaternary structure, heterodimer of an alpha (Kunitz-type) and a beta (phospholipase A2 homolog) chains; non-covalently-linked. In terms of tissue distribution, expressed by the venom gland.

The protein resides in the secreted. Functionally, heterodimer: MitTx, a heteromeric complex between Kunitz- and phospholipase-A2-like proteins, potently, persistently and selectively activates rat and chicken acid-sensing ion channel ASIC1. Both alternatively spliced rat isoforms ASIC1a and ASIC1b are activated, with a higher potency for ASIC1a (EC(50)=9.4 nM) vs ASIC1b (EC(50)=23 nM). The rat ASIC3 subtype is also sensitive to the heterodimer, but with a lower potency (EC(50)=830 nM). On rat ASIC2a, the toxin shows a very weak activation, but produces a remarkable potentiation (&gt;100-fold) of protons when the extracellular pH drops below neutrality. Moderate and weak activations are also observed on the heterotrimers Asic1a-Asic2a and Asic1a-Asic3 (expressed in CHO cells), respectively. The binding sites of the beta subunit of MitTx and the spider psalmotoxin-1 toxin overlap, explaining why these toxins are mutually exclusive. In vivo, the heterodimer elicits robust pain-related behavior in mice by activation of ASIC1 channels on capsaicin-sensitive nerve fibers. Monomer: does not have phospholipase A2 activity but may maintain some lipid-binding character from its PLA2 lineage, which could aid in effecting neuronal depolarization. The chain is Basic phospholipase A2 homolog MitTx-beta from Micrurus tener tener (Texas coral snake).